We begin with the raw amino-acid sequence, 183 residues long: Probable GTP-binding protein EngB (183 aa).

One can recognise an EngB-type G domain in the interval 18-183 (DQNEIVFWGR…LSDLVEHFEL (166 aa)). GTP contacts are provided by residues 26–33 (GRSNVGKS), 52–56 (GRTRL), 70–73 (DLPG), 137–140 (TKID), and 166–168 (VSS). Mg(2+)-binding residues include Ser-33 and Thr-54.

It belongs to the TRAFAC class TrmE-Era-EngA-EngB-Septin-like GTPase superfamily. EngB GTPase family. Mg(2+) serves as cofactor.

Necessary for normal cell division and for the maintenance of normal septation. This Metamycoplasma arthritidis (strain 158L3-1) (Mycoplasma arthritidis) protein is Probable GTP-binding protein EngB.